The primary structure comprises 213 residues: 3,4-dihydroxy-2-butanone 4-phosphate synthase (213 aa).

D-ribulose 5-phosphate is bound by residues 37–38 (RE), Asp-42, 150–154 (RPGHT), and Glu-174. Glu-38 provides a ligand contact to Mg(2+). A Mg(2+)-binding site is contributed by His-153.

This sequence belongs to the DHBP synthase family. As to quaternary structure, homodimer. Requires Mg(2+) as cofactor. The cofactor is Mn(2+).

The catalysed reaction is D-ribulose 5-phosphate = (2S)-2-hydroxy-3-oxobutyl phosphate + formate + H(+). The protein operates within cofactor biosynthesis; riboflavin biosynthesis; 2-hydroxy-3-oxobutyl phosphate from D-ribulose 5-phosphate: step 1/1. Its function is as follows. Catalyzes the conversion of D-ribulose 5-phosphate to formate and 3,4-dihydroxy-2-butanone 4-phosphate. This chain is 3,4-dihydroxy-2-butanone 4-phosphate synthase, found in Clostridium botulinum (strain ATCC 19397 / Type A).